Here is a 405-residue protein sequence, read N- to C-terminus: uncharacterized protein (405 aa).

This sequence belongs to the UDP-glycosyltransferase family.

This is an uncharacterized protein from Bacillus subtilis (strain 168).